The following is a 237-amino-acid chain: Phosphoribosylaminoimidazole-succinocarboxamide synthase (237 aa).

The protein belongs to the SAICAR synthetase family.

It catalyses the reaction 5-amino-1-(5-phospho-D-ribosyl)imidazole-4-carboxylate + L-aspartate + ATP = (2S)-2-[5-amino-1-(5-phospho-beta-D-ribosyl)imidazole-4-carboxamido]succinate + ADP + phosphate + 2 H(+). It participates in purine metabolism; IMP biosynthesis via de novo pathway; 5-amino-1-(5-phospho-D-ribosyl)imidazole-4-carboxamide from 5-amino-1-(5-phospho-D-ribosyl)imidazole-4-carboxylate: step 1/2. In Methanosarcina mazei (strain ATCC BAA-159 / DSM 3647 / Goe1 / Go1 / JCM 11833 / OCM 88) (Methanosarcina frisia), this protein is Phosphoribosylaminoimidazole-succinocarboxamide synthase.